Consider the following 267-residue polypeptide: Hydroxyacylglutathione hydrolase (267 aa).

The Zn(2+) site is built by histidine 55, histidine 57, aspartate 59, histidine 60, histidine 121, aspartate 138, and histidine 176.

This sequence belongs to the metallo-beta-lactamase superfamily. Glyoxalase II family. As to quaternary structure, monomer. The cofactor is Zn(2+).

The enzyme catalyses an S-(2-hydroxyacyl)glutathione + H2O = a 2-hydroxy carboxylate + glutathione + H(+). The protein operates within secondary metabolite metabolism; methylglyoxal degradation; (R)-lactate from methylglyoxal: step 2/2. Functionally, thiolesterase that catalyzes the hydrolysis of S-D-lactoyl-glutathione to form glutathione and D-lactic acid. The chain is Hydroxyacylglutathione hydrolase from Shewanella oneidensis (strain ATCC 700550 / JCM 31522 / CIP 106686 / LMG 19005 / NCIMB 14063 / MR-1).